The sequence spans 123 residues: Large ribosomal subunit protein bL12 (123 aa).

This sequence belongs to the bacterial ribosomal protein bL12 family. As to quaternary structure, homodimer. Part of the ribosomal stalk of the 50S ribosomal subunit. Forms a multimeric L10(L12)X complex, where L10 forms an elongated spine to which 2 to 4 L12 dimers bind in a sequential fashion. Binds GTP-bound translation factors.

Functionally, forms part of the ribosomal stalk which helps the ribosome interact with GTP-bound translation factors. Is thus essential for accurate translation. The polypeptide is Large ribosomal subunit protein bL12 (Ectopseudomonas mendocina (strain ymp) (Pseudomonas mendocina)).